Consider the following 4235-residue polypeptide: Tenellin synthetase (4235 aa).

A Ketosynthase family 3 (KS3) domain is found at 15-455 (SEPIAIVGSA…GTNAHAIIER (441 aa)). Active-site for beta-ketoacyl synthase activity residues include cysteine 189, histidine 326, and histidine 375. Residues 590 to 924 (IFTGQGAQWP…ANDAVAFSTA (335 aa)) form a malonyl-CoA:ACP transacylase (MAT) domain region. Positions 993 to 1135 (HELLGRRMPD…GRIAVHLGAK (143 aa)) are N-terminal hotdog fold. The interval 993 to 1310 (HELLGRRMPD…GFEVRAVGEP (318 aa)) is dehydratase (DH) domain. Residues 993–1313 (HELLGRRMPD…VRAVGEPDAS (321 aa)) enclose the PKS/mFAS DH domain. The Proton acceptor; for dehydratase activity role is filled by histidine 1025. The C-terminal hotdog fold stretch occupies residues 1158–1313 (LQQLDCEKLY…VRAVGEPDAS (156 aa)). Aspartate 1217 acts as the Proton donor; for dehydratase activity in catalysis. A methyltransferase (MT) domain region spans residues 1459-1652 (RLYTEDKGMH…FSGVDHIVHD (194 aa)). Residues 2208-2381 (TYLMVGAAGG…AASIIHVGHV (174 aa)) are ketoreductase (KR) domain. A Carrier 1 domain is found at 2500–2580 (EAAAAALKGF…QLSALAAKLA (81 aa)). Serine 2540 bears the O-(pantetheine 4'-phosphoryl)serine mark. A disordered region spans residues 2587-2709 (RAQLEEASGN…EISSNGFFTQ (123 aa)). Basic and acidic residues predominate over residues 2605–2619 (NDKETGPSKKGKAQE). 2 stretches are compositionally biased toward polar residues: residues 2645-2659 (GGSS…SSVS) and 2666-2678 (QEST…NNGE). The segment covering 2679–2695 (STPSKSSNCNSDSGSDN) has biased composition (low complexity). A condensation (C) domain region spans residues 2720 to 3163 (REAPMSPAQS…TAQSVGDCVV (444 aa)). Residues 3197–3609 (CQQHSTKSAI…DGTLLCFGRI (413 aa)) form an adenylation (A) (KR) domain region. A disordered region spans residues 3724–3750 (DEAAAATSPSNDNNNNNTPSGGGGEKM). Residues 3726–3742 (AAAATSPSNDNNNNNTP) are compositionally biased toward low complexity. One can recognise a Carrier 2 domain in the interval 3748 to 3833 (EKMTVRQGEL…GMARCVAEQR (86 aa)). Serine 3793 bears the O-(pantetheine 4'-phosphoryl)serine mark. Residues 3860 to 3889 (EKLQHSSASSSSSSSSSSAGSSSTQRPRKT) form a disordered region. Residues 3865 to 3882 (SSASSSSSSSSSSAGSSS) show a composition bias toward low complexity. The reductase (RED) domain stretch occupies residues 3896–4141 (LTGATGFLGG…LDFGQVDKVV (246 aa)).

In the C-terminal section; belongs to the NRP synthetase family.

Its pathway is secondary metabolite biosynthesis. Functionally, hybrid PKS-NRPS synthetase; part of the gene cluster that mediates the biosynthesis of tenellin-type 2-pyridones, iron-chelating compounds involved in iron stress tolerance, competition with the natural competitor fungus Metarhizium robertsii and insect hosts infection. TenS catalyzes the assembly of the polyketide-amino acid backbone. Because tenS lacks a designated enoylreductase (ER) domain, the required activity is provided the enoyl reductase tenC. Upon formation of the polyketide backbone on the thiotemplate, the triketide is transferred to the NRPS module and linked to tyrosine to produce the pyrrolidine-2-dione intermediates, including pretellinin A, 11-hydropretellenin A, 12-hydropretellenin A, 13-hydropretellenin A, 14-hydropretellenin A, 12-oxopretellenin A and prototellinin D. The pathway begins with the assembly of the polyketide-amino acid backbone by the hybrid PKS-NRPS tenS with the help of the enoyl reductase tenC. These enzymes catalyze the synthesis of the pyrrolidine-2-dione intermediates pretellinin A, 11-hydropretellenin A, 12-hydropretellenin A, 13-hydropretellenin A, 14-hydropretellenin A, 12-oxopretellenin A and prototellinin D. The cytochrome P450 monooxygenase tenA then catalyzes an oxidative ring expansion of pretenellin A and 14-hydropretellenin A to form the 2-pyridone core, leading to pretenellin B and pyridovericin, respectively. The cytochrome P450 monooxygenase tenB is then required for the selective N-hydroxylation of the 2-pyridone nitrogen of yield tellinin and 15-hydroxytellenin (15-HT), respectively. The UDP-glucosyltransferase GT1 and the methyltransferase MT1, located outside the tenS gene cluster, contribute to the stepwise glycosylation and methylation of 15-HT to obtain the glycoside pyridovericin-N-O-(4-O-methyl-beta-D-glucopyranoside) (PMGP). Additional related compounds such as 1-O-methyl-15-HT, (8Z)-1-O-methyl-15-HT, and O-methyltenellin A are also produced but the enzymes involved in their biosynthesis have still to be determined. This Beauveria bassiana (strain ARSEF 2860) (White muscardine disease fungus) protein is Tenellin synthetase.